Reading from the N-terminus, the 349-residue chain is tRNA pseudouridine synthase D (349 aa).

F27 is a substrate binding site. D80 functions as the Nucleophile in the catalytic mechanism. Position 129 (N129) interacts with substrate. The TRUD domain occupies 155-303 (GVPNYFGPQR…VEAARRAMLL (149 aa)). F329 lines the substrate pocket.

The protein belongs to the pseudouridine synthase TruD family.

It catalyses the reaction uridine(13) in tRNA = pseudouridine(13) in tRNA. Functionally, responsible for synthesis of pseudouridine from uracil-13 in transfer RNAs. The polypeptide is tRNA pseudouridine synthase D (Cronobacter sakazakii (strain ATCC BAA-894) (Enterobacter sakazakii)).